We begin with the raw amino-acid sequence, 3396 residues long: Versican core protein (3396 aa).

The signal sequence occupies residues 1-20; sequence MFINIKSILWMCSTLIVTHA. In terms of domain architecture, Ig-like V-type spans 21 to 146; it reads LHKVKVGKSP…EDTQDTVSLT (126 aa). 5 cysteine pairs are disulfide-bonded: cysteine 44–cysteine 130, cysteine 172–cysteine 243, cysteine 196–cysteine 217, cysteine 270–cysteine 345, and cysteine 294–cysteine 315. N-linked (GlcNAc...) asparagine glycosylation is present at asparagine 57. Link domains are found at residues 150–245 and 251–347; these read VVFH…YCYV and DVFH…YCFK. Asparagine 330 is a glycosylation site (N-linked (GlcNAc...) asparagine). Positions 348-1335 are GAG-alpha (glucosaminoglycan attachment domain); the sequence is PKEATTIDLS…IIEVRENKTG (988 aa). The segment covering 420-430 has biased composition (polar residues); it reads ATKLPTPTGST. 2 disordered regions span residues 420–439 and 603–622; these read ATKL…MDDY and STTV…MDDW. Asparagine 615 carries N-linked (GlcNAc...) asparagine glycosylation. O-linked (Xyl...) (chondroitin sulfate) serine glycosylation is present at serine 659. 2 N-linked (GlcNAc...) asparagine glycosylation sites follow: asparagine 782 and asparagine 809. 3 disordered regions span residues 807–829, 1126–1154, and 1277–1316; these read EDNT…LPPA, IGPK…TSSL, and REYF…PAST. A compositionally biased stretch (polar residues) spans 811 to 824; that stretch reads TSKPLESTEPSASS. The segment covering 1143–1154 has biased composition (low complexity); that stretch reads EGSSTTGFTSSL. N-linked (GlcNAc...) asparagine glycosylation is found at asparagine 1332 and asparagine 1398. Positions 1336 to 3089 are GAG-beta; sequence RMSDLSVIGH…VEGTAIYLPG (1754 aa). Disordered regions lie at residues 1420 to 1497 and 1510 to 1539; these read VPKD…SGGE and FESG…HTEP. Over residues 1422 to 1433 the composition is skewed to basic and acidic residues; that stretch reads KDPEAAEARRGQ. 2 N-linked (GlcNAc...) asparagine glycosylation sites follow: asparagine 1442 and asparagine 1468. Low complexity predominate over residues 1469-1480; that stretch reads ESTETTESLEVT. Over residues 1517–1538 the composition is skewed to basic and acidic residues; that stretch reads KGAESVTERDTEVGHQAHEHTE. Serine 1548 and serine 1631 each carry an O-linked (Xyl...) (chondroitin sulfate) serine glycan. A glycan (N-linked (GlcNAc...) asparagine) is linked at asparagine 1663. Disordered regions lie at residues 1717–1737 and 1759–1789; these read STTV…TAST and PNVA…MTDS. Basic and acidic residues predominate over residues 1720–1729; that stretch reads VEEKKRKEEE. Polar residues predominate over residues 1760 to 1781; that stretch reads NVATSSDSGTRKSFMSLTTPTQ. An N-linked (GlcNAc...) asparagine glycan is attached at asparagine 1898. O-linked (Xyl...) (chondroitin sulfate) serine glycosylation is found at serine 1935 and serine 1959. Disordered stretches follow at residues 1962 to 1994, 2107 to 2134, and 2168 to 2188; these read AAFR…STMV, RQEI…NSPA, and KEMK…PDAN. Over residues 1969 to 1978 the composition is skewed to low complexity; it reads TSPSTVPTSV. Residues 2111 to 2120 are compositionally biased toward acidic residues; that stretch reads ESETTSEEQI. Serine 2116 is subject to Phosphoserine; by FAM20C. N-linked (GlcNAc...) asparagine glycosylation is present at asparagine 2179. Serine 2247 and serine 2254 each carry an O-linked (Xyl...) (chondroitin sulfate) serine glycan. 5 N-linked (GlcNAc...) asparagine glycosylation sites follow: asparagine 2272, asparagine 2280, asparagine 2360, asparagine 2385, and asparagine 2392. 4 disordered regions span residues 2371–2396, 2445–2473, 2493–2518, and 2598–2617; these read TSRP…ETTT, SATT…EVPS, SEQN…STDG, and DTEV…DDST. Composition is skewed to polar residues over residues 2445-2461 and 2496-2513; these read SATT…TFVS and NKSS…VSYE. An N-linked (GlcNAc...) asparagine glycan is attached at asparagine 2496. Residue serine 2608 is modified to Phosphoserine. A Phosphothreonine modification is found at threonine 2617. N-linked (GlcNAc...) asparagine glycosylation occurs at asparagine 2628. 3 O-linked (Xyl...) (chondroitin sulfate) serine glycosylation sites follow: serine 2722, serine 2723, and serine 2767. 2 disordered regions span residues 2834 to 2856 and 2881 to 2905; these read GSEA…DVGS and EEYL…EDDG. Over residues 2896–2905 the composition is skewed to basic and acidic residues; it reads TKLEPSEDDG. N-linked (GlcNAc...) asparagine glycosylation is present at asparagine 2934. Serine 2941 carries O-linked (Xyl...) (chondroitin sulfate) serine glycosylation. N-linked (GlcNAc...) asparagine glycosylation is present at asparagine 3067. In terms of domain architecture, EGF-like 1 spans 3089–3125; it reads GPDRCKMNPCLNGGTCYPTETSYVCTCVPGYSGDQCE. Disulfide bonds link cysteine 3093-cysteine 3104, cysteine 3098-cysteine 3113, cysteine 3115-cysteine 3124, cysteine 3131-cysteine 3142, cysteine 3136-cysteine 3151, cysteine 3153-cysteine 3162, cysteine 3169-cysteine 3180, cysteine 3197-cysteine 3289, cysteine 3265-cysteine 3281, cysteine 3296-cysteine 3339, and cysteine 3325-cysteine 3352. The EGF-like 2; calcium-binding domain maps to 3127 to 3163; that stretch reads DFDECHSNPCRNGATCVDGFNTFRCLCLPSYVGALCE. Residues 3176 to 3290 enclose the C-type lectin domain; that stretch reads FQGQCYKYFA…CNYHLTYTCK (115 aa). The Sushi domain occupies 3294 to 3354; sequence VACGQPPVVE…WAIPKITCMN (61 aa). 2 N-linked (GlcNAc...) asparagine glycosylation sites follow: asparagine 3369 and asparagine 3379. A compositionally biased stretch (polar residues) spans 3371–3380; sequence SSAKDNSINT. The tract at residues 3371–3396 is disordered; the sequence is SSAKDNSINTSKHDHRWSRRWQESRR.

This sequence belongs to the aggrecan/versican proteoglycan family. Interacts with FBLN1. Phosphorylated by FAM20C in the extracellular medium. In terms of processing, proteolytically cleaved by ADAMTS5 and ADAMTS15 in the pericellular matrix surrounding myoblasts, facilitating myoblast contact and fusion which is required for skeletal muscle development and regeneration. Detected in placenta (at protein level). Detected in cerebrospinal fluid, fibroblasts and urine (at protein level). Expressed in the retina (at protein level). Cerebral white matter and plasma. Isoform V0: Expressed in normal brain, gliomas, medulloblastomas, schwannomas, neurofibromas, and meningiomas. Isoform V1: Expressed in normal brain, gliomas, medulloblastomas, schwannomas, neurofibromas, and meningiomas. Isoform V2: Restricted to normal brain and gliomas. Isoform V3: Found in all these tissues except medulloblastomas.

The protein localises to the secreted. The protein resides in the extracellular space. It is found in the extracellular matrix. It localises to the cell projection. Its subcellular location is the cilium. The protein localises to the photoreceptor outer segment. The protein resides in the interphotoreceptor matrix. Functionally, may play a role in intercellular signaling and in connecting cells with the extracellular matrix. May take part in the regulation of cell motility, growth and differentiation. Binds hyaluronic acid. This Homo sapiens (Human) protein is Versican core protein (VCAN).